Reading from the N-terminus, the 218-residue chain is Large ribosomal subunit protein eL13 (218 aa).

Residues 196–218 (AKRAKEAAESEDAAKGDPKKAKK) are disordered. Residues 199–218 (AKEAAESEDAAKGDPKKAKK) show a composition bias toward basic and acidic residues.

Belongs to the eukaryotic ribosomal protein eL13 family. In terms of assembly, component of the 60S large ribosomal subunit (LSU).

It is found in the cytoplasm. Functionally, component of the ribosome, a large ribonucleoprotein complex responsible for the synthesis of proteins in the cell. The small ribosomal subunit (SSU) binds messenger RNAs (mRNAs) and translates the encoded message by selecting cognate aminoacyl-transfer RNA (tRNA) molecules. The large subunit (LSU) contains the ribosomal catalytic site termed the peptidyl transferase center (PTC), which catalyzes the formation of peptide bonds, thereby polymerizing the amino acids delivered by tRNAs into a polypeptide chain. The nascent polypeptides leave the ribosome through a tunnel in the LSU and interact with protein factors that function in enzymatic processing, targeting, and the membrane insertion of nascent chains at the exit of the ribosomal tunnel. As part of the LSU, it is probably required for its formation and the maturation of rRNAs. This is Large ribosomal subunit protein eL13 (RpL13) from Drosophila melanogaster (Fruit fly).